The following is a 516-amino-acid chain: Membrane-bound transcription factor site-2 protease (516 aa).

Residues methionine 1–proline 3 are Cytoplasmic-facing. Residues valine 4–leucine 24 form a helical membrane-spanning segment. The Lumenal portion of the chain corresponds to lysine 25 to glutamine 74. 2 consecutive transmembrane segments (helical) span residues tryptophan 75–glycine 95 and lysine 96–alanine 107. Residues aspartate 108–glutamine 141 lie on the Lumenal side of the membrane. A helical transmembrane segment spans residues valine 142–valine 166. Histidine 168 provides a ligand contact to Zn(2+). The active site involves glutamate 169. 3 consecutive transmembrane segments (helical) span residues glycine 171–phenylalanine 183, asparagine 184–leucine 206, and phenylalanine 226–tyrosine 248. Histidine 172 lines the Zn(2+) pocket. At threonine 249–lysine 443 the chain is on the lumenal side. The N-linked (GlcNAc...) asparagine glycan is linked to asparagine 334. A run of 2 helical transmembrane segments spans residues tyrosine 444–phenylalanine 461 and alanine 462–leucine 473. At aspartate 474–leucine 489 the chain is on the lumenal side. Residues isoleucine 490 to leucine 510 form a helical membrane-spanning segment. The Cytoplasmic portion of the chain corresponds to tryptophan 511–arginine 516.

Belongs to the peptidase M50A family. It depends on Zn(2+) as a cofactor.

The protein localises to the membrane. The protein resides in the cytoplasm. It localises to the golgi apparatus membrane. It carries out the reaction Cleaves several transcription factors that are type-2 transmembrane proteins within membrane-spanning domains. Known substrates include sterol regulatory element-binding protein (SREBP) -1, SREBP-2 and forms of the transcriptional activator ATF6. SREBP-2 is cleaved at the site 477-DRSRILL-|-CVLTFLCLSFNPLTSLLQWGGA-505. The residues Asn-Pro, 11 residues distal to the site of cleavage in the membrane-spanning domain, are important for cleavage by S2P endopeptidase. Replacement of either of these residues does not prevent cleavage, but there is no cleavage if both of these residues are replaced.. Its function is as follows. Zinc metalloprotease that mediates intramembrane proteolysis of proteins such as ATF6, ATF6B, SREBF1/SREBP1 and SREBF2/SREBP2. Catalyzes the second step in the proteolytic activation of the sterol regulatory element-binding proteins (SREBPs) SREBF1/SREBP1 and SREBF2/SREBP2: cleaves SREBPs within the first transmembrane segment, thereby releasing the N-terminal segment with a portion of the transmembrane segment attached. Mature N-terminal SREBP fragments shuttle to the nucleus and activate gene transcription. Also mediates the second step in the proteolytic activation of the cyclic AMP-dependent transcription factor ATF-6 (ATF6 and ATF6B). Involved in intramembrane proteolysis during bone formation. In astrocytes and osteoblasts, upon DNA damage and ER stress, mediates the second step of the regulated intramembrane proteolytic activation of the transcription factor CREB3L1, leading to the inhibition of cell-cycle progression. The protein is Membrane-bound transcription factor site-2 protease of Bos taurus (Bovine).